Reading from the N-terminus, the 186-residue chain is Protein C (186 aa).

A compositionally biased stretch (polar residues) spans 1-15; sequence MSKTDWNASGLSRPS. Residues 1 to 44 are disordered; sequence MSKTDWNASGLSRPSPSAHWPSRKLWQHGQKYQTTQDRSEPPAG.

The protein belongs to the morbillivirus protein C family. In terms of assembly, interacts with the phosphoprotein (via C-terminus); this interaction allows C to associate with the ribonucleocapsid.

The protein localises to the host nucleus. Its subcellular location is the host cytoplasmic vesicle. Its function is as follows. Ribonucleocapsid-associated protein that interacts with the phosphoprotein (P), thereby increasing replication accuracy and processivity of the polymerase complex. This chain is Protein C (P/V/C), found in Homo sapiens (Human).